The sequence spans 766 residues: 5-methyltetrahydropteroyltriglutamate--homocysteine methyltransferase 1 (766 aa).

The 5-methyltetrahydropteroyltri-L-glutamate site is built by lysine 18 and asparagine 116. L-homocysteine-binding positions include isoleucine 438 to serine 440 and glutamate 491. L-methionine contacts are provided by residues isoleucine 438–serine 440 and glutamate 491. 5-methyltetrahydropteroyltri-L-glutamate-binding positions include aspartate 496, tyrosine 519, arginine 522–cysteine 523, and tryptophan 568. Aspartate 606 contributes to the L-homocysteine binding site. L-methionine is bound at residue aspartate 606. Residues histidine 648, cysteine 650, histidine 659, and glutamate 672 each coordinate Zn(2+). Histidine 702 functions as the Proton donor in the catalytic mechanism. Zn(2+) is bound at residue cysteine 734.

Belongs to the vitamin-B12 independent methionine synthase family. Zn(2+) serves as cofactor.

The protein resides in the cytoplasm. It localises to the cytosol. It carries out the reaction 5-methyltetrahydropteroyltri-L-glutamate + L-homocysteine = tetrahydropteroyltri-L-glutamate + L-methionine. It participates in amino-acid biosynthesis; L-methionine biosynthesis via de novo pathway; L-methionine from L-homocysteine (MetE route): step 1/1. In terms of biological role, catalyzes the transfer of a methyl group from 5-methyltetrahydrofolate to homocysteine resulting in methionine formation. The chain is 5-methyltetrahydropteroyltriglutamate--homocysteine methyltransferase 1 from Oryza sativa subsp. japonica (Rice).